Reading from the N-terminus, the 786-residue chain is LPS-assembly protein LptD (786 aa).

The first 39 residues, 1–39, serve as a signal peptide directing secretion; it reads MPPKPLFPNVFPGDGAPRKRRLALALLAVPGLVPAVSYA. The segment at 767–786 is disordered; it reads PGYTPLPPPPPPMSRFSNYE. Residues 770-779 are compositionally biased toward pro residues; the sequence is TPLPPPPPPM.

Belongs to the LptD family. As to quaternary structure, component of the lipopolysaccharide transport and assembly complex. Interacts with LptE and LptA.

It is found in the cell outer membrane. Its function is as follows. Together with LptE, is involved in the assembly of lipopolysaccharide (LPS) at the surface of the outer membrane. The chain is LPS-assembly protein LptD from Burkholderia lata (strain ATCC 17760 / DSM 23089 / LMG 22485 / NCIMB 9086 / R18194 / 383).